Reading from the N-terminus, the 438-residue chain is Adenosylhomocysteinase (438 aa).

Substrate is bound by residues Thr61, Asp137, and Glu162. 163–165 (TTT) is an NAD(+) binding site. Substrate contacts are provided by Lys192 and Asp196. NAD(+)-binding positions include Asn197, 226–231 (GYGDVG), Glu249, Asn284, 305–307 (IGH), and Asn352.

This sequence belongs to the adenosylhomocysteinase family. Requires NAD(+) as cofactor.

The protein resides in the cytoplasm. The enzyme catalyses S-adenosyl-L-homocysteine + H2O = L-homocysteine + adenosine. Its pathway is amino-acid biosynthesis; L-homocysteine biosynthesis; L-homocysteine from S-adenosyl-L-homocysteine: step 1/1. In terms of biological role, may play a key role in the regulation of the intracellular concentration of adenosylhomocysteine. The polypeptide is Adenosylhomocysteinase (Christiangramia forsetii (strain DSM 17595 / CGMCC 1.15422 / KT0803) (Gramella forsetii)).